The following is a 170-amino-acid chain: Crossover junction endodeoxyribonuclease RuvC (170 aa).

Residues Asp-12, Glu-72, and Asp-144 contribute to the active site. Residues Asp-12, Glu-72, and Asp-144 each contribute to the Mg(2+) site.

Belongs to the RuvC family. In terms of assembly, homodimer which binds Holliday junction (HJ) DNA. The HJ becomes 2-fold symmetrical on binding to RuvC with unstacked arms; it has a different conformation from HJ DNA in complex with RuvA. In the full resolvosome a probable DNA-RuvA(4)-RuvB(12)-RuvC(2) complex forms which resolves the HJ. Mg(2+) serves as cofactor.

It localises to the cytoplasm. The catalysed reaction is Endonucleolytic cleavage at a junction such as a reciprocal single-stranded crossover between two homologous DNA duplexes (Holliday junction).. Functionally, the RuvA-RuvB-RuvC complex processes Holliday junction (HJ) DNA during genetic recombination and DNA repair. Endonuclease that resolves HJ intermediates. Cleaves cruciform DNA by making single-stranded nicks across the HJ at symmetrical positions within the homologous arms, yielding a 5'-phosphate and a 3'-hydroxyl group; requires a central core of homology in the junction. The consensus cleavage sequence is 5'-(A/T)TT(C/G)-3'. Cleavage occurs on the 3'-side of the TT dinucleotide at the point of strand exchange. HJ branch migration catalyzed by RuvA-RuvB allows RuvC to scan DNA until it finds its consensus sequence, where it cleaves and resolves the cruciform DNA. This is Crossover junction endodeoxyribonuclease RuvC from Nitrobacter hamburgensis (strain DSM 10229 / NCIMB 13809 / X14).